A 245-amino-acid chain; its full sequence is tRNA pseudouridine synthase A (245 aa).

Asp-52 functions as the Nucleophile in the catalytic mechanism. Tyr-111 lines the substrate pocket.

Belongs to the tRNA pseudouridine synthase TruA family. Homodimer.

The catalysed reaction is uridine(38/39/40) in tRNA = pseudouridine(38/39/40) in tRNA. Its function is as follows. Formation of pseudouridine at positions 38, 39 and 40 in the anticodon stem and loop of transfer RNAs. The polypeptide is tRNA pseudouridine synthase A (Wolbachia pipientis wMel).